We begin with the raw amino-acid sequence, 517 residues long: 6-phosphogluconate dehydrogenase, decarboxylating (517 aa).

NADP(+) is bound by residues Gly35–Gly40, Asn58–Thr60, Val100–Ala102, and Asn128. Substrate contacts are provided by residues Asn128 and Ser154–Gly156. Lys208 (proton acceptor) is an active-site residue. His211 to Asn212 contacts substrate. Catalysis depends on Glu215, which acts as the Proton donor. Substrate-binding residues include Tyr216, Lys286, Arg313, Arg474, and His480.

It belongs to the 6-phosphogluconate dehydrogenase family. Homodimer.

It carries out the reaction 6-phospho-D-gluconate + NADP(+) = D-ribulose 5-phosphate + CO2 + NADPH. It participates in carbohydrate degradation; pentose phosphate pathway; D-ribulose 5-phosphate from D-glucose 6-phosphate (oxidative stage): step 3/3. Catalyzes the oxidative decarboxylation of 6-phosphogluconate to ribulose 5-phosphate and CO(2), with concomitant reduction of NADP to NADPH. The sequence is that of 6-phosphogluconate dehydrogenase, decarboxylating (DOR14) from Candida albicans (Yeast).